The sequence spans 320 residues: Cytochrome f (320 aa).

Positions 1-35 (MQTRKTFSWIKEEITRSISVLLMIYIITWASISNA) are cleaved as a signal peptide. Heme-binding residues include tyrosine 36, cysteine 56, cysteine 59, and histidine 60. Residues 286–306 (VQGLLFFLASVILAQIFLVLK) traverse the membrane as a helical segment.

This sequence belongs to the cytochrome f family. The 4 large subunits of the cytochrome b6-f complex are cytochrome b6, subunit IV (17 kDa polypeptide, petD), cytochrome f and the Rieske protein, while the 4 small subunits are PetG, PetL, PetM and PetN. The complex functions as a dimer. Heme is required as a cofactor.

The protein resides in the plastid. The protein localises to the chloroplast thylakoid membrane. Functionally, component of the cytochrome b6-f complex, which mediates electron transfer between photosystem II (PSII) and photosystem I (PSI), cyclic electron flow around PSI, and state transitions. This Manihot esculenta (Cassava) protein is Cytochrome f.